The following is a 97-amino-acid chain: Aspartyl/glutamyl-tRNA(Asn/Gln) amidotransferase subunit C (97 aa).

The protein belongs to the GatC family. As to quaternary structure, heterotrimer of A, B and C subunits.

It catalyses the reaction L-glutamyl-tRNA(Gln) + L-glutamine + ATP + H2O = L-glutaminyl-tRNA(Gln) + L-glutamate + ADP + phosphate + H(+). The enzyme catalyses L-aspartyl-tRNA(Asn) + L-glutamine + ATP + H2O = L-asparaginyl-tRNA(Asn) + L-glutamate + ADP + phosphate + 2 H(+). In terms of biological role, allows the formation of correctly charged Asn-tRNA(Asn) or Gln-tRNA(Gln) through the transamidation of misacylated Asp-tRNA(Asn) or Glu-tRNA(Gln) in organisms which lack either or both of asparaginyl-tRNA or glutaminyl-tRNA synthetases. The reaction takes place in the presence of glutamine and ATP through an activated phospho-Asp-tRNA(Asn) or phospho-Glu-tRNA(Gln). In Anaeromyxobacter dehalogenans (strain 2CP-C), this protein is Aspartyl/glutamyl-tRNA(Asn/Gln) amidotransferase subunit C.